Here is a 602-residue protein sequence, read N- to C-terminus: Glutamine--fructose-6-phosphate aminotransferase [isomerizing] (602 aa).

Cys2 acts as the Nucleophile; for GATase activity in catalysis. Residues 2 to 222 (CGIFGIIFAE…DGEYGYITAG (221 aa)) form the Glutamine amidotransferase type-2 domain. 2 SIS domains span residues 284 to 422 (VANA…ALGH) and 452 to 592 (LAKR…PDKP). Lys597 (for Fru-6P isomerization activity) is an active-site residue.

As to quaternary structure, homodimer.

It is found in the cytoplasm. It catalyses the reaction D-fructose 6-phosphate + L-glutamine = D-glucosamine 6-phosphate + L-glutamate. Catalyzes the first step in hexosamine metabolism, converting fructose-6P into glucosamine-6P using glutamine as a nitrogen source. This is Glutamine--fructose-6-phosphate aminotransferase [isomerizing] from Pyrobaculum aerophilum (strain ATCC 51768 / DSM 7523 / JCM 9630 / CIP 104966 / NBRC 100827 / IM2).